The primary structure comprises 502 residues: ATP synthase subunit alpha (502 aa).

Position 169–176 (169–176 (GDRQTGKT)) interacts with ATP.

It belongs to the ATPase alpha/beta chains family. As to quaternary structure, F-type ATPases have 2 components, CF(1) - the catalytic core - and CF(0) - the membrane proton channel. CF(1) has five subunits: alpha(3), beta(3), gamma(1), delta(1), epsilon(1). CF(0) has three main subunits: a(1), b(2) and c(9-12). The alpha and beta chains form an alternating ring which encloses part of the gamma chain. CF(1) is attached to CF(0) by a central stalk formed by the gamma and epsilon chains, while a peripheral stalk is formed by the delta and b chains.

Its subcellular location is the cell inner membrane. It catalyses the reaction ATP + H2O + 4 H(+)(in) = ADP + phosphate + 5 H(+)(out). Its function is as follows. Produces ATP from ADP in the presence of a proton gradient across the membrane. The alpha chain is a regulatory subunit. The polypeptide is ATP synthase subunit alpha (Geobacter sp. (strain M21)).